We begin with the raw amino-acid sequence, 97 residues long: Small ribosomal subunit protein bS20 (97 aa).

It belongs to the bacterial ribosomal protein bS20 family.

In terms of biological role, binds directly to 16S ribosomal RNA. The chain is Small ribosomal subunit protein bS20 from Methylibium petroleiphilum (strain ATCC BAA-1232 / LMG 22953 / PM1).